The primary structure comprises 478 residues: Membrane-bound lytic murein transglycosylase F (478 aa).

The N-terminal stretch at 1-22 is a signal peptide; the sequence is MTRFLFAIILGFLLTACQQVTV. The interval 23–257 is non-LT domain; that stretch reads EETEYVPHKL…HLNEKYFGHV (235 aa). The LT domain stretch occupies residues 258–478; sequence KRFDYIDTRA…PGTLSPDKPK (221 aa). Residue Glu-302 is part of the active site. The tract at residues 446–478 is disordered; the sequence is SKQQNSDEEEPSDLASEDGPAPVPGTLSPDKPK. Acidic residues predominate over residues 451-461; sequence SDEEEPSDLAS.

The protein in the N-terminal section; belongs to the bacterial solute-binding protein 3 family. In the C-terminal section; belongs to the transglycosylase Slt family.

It is found in the cell outer membrane. The catalysed reaction is Exolytic cleavage of the (1-&gt;4)-beta-glycosidic linkage between N-acetylmuramic acid (MurNAc) and N-acetylglucosamine (GlcNAc) residues in peptidoglycan, from either the reducing or the non-reducing ends of the peptidoglycan chains, with concomitant formation of a 1,6-anhydrobond in the MurNAc residue.. Murein-degrading enzyme that degrades murein glycan strands and insoluble, high-molecular weight murein sacculi, with the concomitant formation of a 1,6-anhydromuramoyl product. Lytic transglycosylases (LTs) play an integral role in the metabolism of the peptidoglycan (PG) sacculus. Their lytic action creates space within the PG sacculus to allow for its expansion as well as for the insertion of various structures such as secretion systems and flagella. The sequence is that of Membrane-bound lytic murein transglycosylase F from Shewanella sp. (strain MR-4).